A 739-amino-acid chain; its full sequence is Bifunctional (p)ppGpp synthase/hydrolase RelA (739 aa).

In terms of domain architecture, HD spans 50–149 (YIVHPIQVAG…VKLADRLHNM (100 aa)). Positions 53 and 77 each coordinate Mn(2+). Residues Glu81 and Asp82 each act as nucleophile, for hydrolase activity in the active site. A Mn(2+)-binding site is contributed by Asp144. Asp264 provides a ligand contact to Mg(2+). Residues 393 to 454 (ERIYVFTPTG…KTGDVVEIVT (62 aa)) form the TGS domain. Residues 664–739 (EIDIYGLNRR…DVYSVKRTNG (76 aa)) form the ACT domain.

This sequence belongs to the RelA/SpoT family. Mg(2+) serves as cofactor. It depends on Mn(2+) as a cofactor.

It catalyses the reaction GTP + ATP = guanosine 3'-diphosphate 5'-triphosphate + AMP. It carries out the reaction guanosine 3',5'-bis(diphosphate) + H2O = GDP + diphosphate + H(+). Its pathway is purine metabolism; ppGpp biosynthesis; ppGpp from GDP: step 1/1. It participates in purine metabolism; ppGpp biosynthesis; ppGpp from GTP: step 1/2. Alpha-beta methylenyl ATP, an ATP-analog inhibitor of the synthase activity also reduces the hydrolase activity about 4-fold. Its function is as follows. In eubacteria ppGpp (guanosine 3'-diphosphate 5'-diphosphate) is a mediator of the stringent response that coordinates a variety of cellular activities in response to changes in nutritional abundance. This enzyme catalyzes both the formation of pppGpp which is then hydrolyzed to form ppGpp, and the hydrolysis of ppGpp. The enzyme does not simultaneously display both synthase and hydrolase activities. In the structure of residues 1-385 there are 2 conformations seen, the hydrolase-OFF/synthase-ON and hydrolase-ON/synthase-OFF, suggesting there is ligand-induced signal transmission between the 2 active sites. In Streptococcus dysgalactiae subsp. equisimilis (Streptococcus equisimilis), this protein is Bifunctional (p)ppGpp synthase/hydrolase RelA (relA).